The sequence spans 1380 residues: MSSSVTSTKYVLNSFNSVPRLSYAKSIDIKDSLTDLIKIQRDSYNAFIGIDQNTESGIKNIFQSMFPIQDLLGRAVLEFVSYSIGEPQYDEYECIKRGITFSVPIRIVLRFIVWKVQEVSFKEVKYVVDEETSEKSIKYIKEQEVSIGDLPTMTSHGTFIINGIERVIVSQMHRSPGVFFDSDKGKTYSSGKLIYSARIIPYRGSWLDFEFDIKDILYFRIDRKRKLPVSLLLRALGLSNNDILDTFYDKIRYVKSEKGWVVPFVADRFRGVRLSHDLMDSDGNVLVKANTRITLRMARKLANDGLTKYLVPFNEIQGLFIANDLLDSTGNALIISAGENITSEHINKLELFNIEEIFVLNIDFLTVGPYILNTLFLDKNVSYEDALFEIYKVLRSGESPSLDTIKAFFDGLFFEKERYDLSTVGRIKLNDHLGLNVSEDITVLTKDDIIHVIKKLVLLRDGEGSVDDIDHLGNRRVRSVGEFIENQFRIGILRLERMIMDYMSSVNFDNAMPCDFVNPKVLATVLKDFFSSSQLSQFMDQTNPLSEVTHKRRLSALGPGGLTRERAGFEVRDVHPTHYGRICPIETPEGQNIGLISSLAIYARINKHGFIESPYRKVDKGVVTDKVEYLLAMQESNYYIADASATLDENNQFVDDMLYCRHDGNFVMVKREEVDYIDVSPKQIVSVAASLIPFLENNDANRALMGSNMQRQAVPLLKADAPLIGTGMESIVAAGSGTVVLAKRGGIVHRVDGLYIVIRAFDQEKNEYLGVDIYNLRKFQRSNHNTCINQRPLVKPGDYVKANDVIADGSAIDQGELALGKNVLVAFMSWQGYNFEDSIVISSEVVKKDVFTSIHIEEFECVVRDTTLGPEKIMRSVPDINEDSLSHLDDVGIVNVGAEVSAGDILVGKVTPRPPVSLPPETKLLVTIFGEKVFDCVDSSLYLPLDVEGTVVDVHVFVRRGVEENDRSLLIKQNEINGFIKERDYEIDVVSEYFYDELKRVLVSSGVQYNNQNIDDYLASIPKKEWWDINLSDEAMLLQVKDLKEKFDSMIQNAHSKFDQKIDKLNYGYDLPQGVLCIVKVFVAVKHNLQPGDKMAGRHGNKGVISRIVPVEDMPYLEDGTPVDIILNSLGVPSRMNVGQILETHLGWASVNLGKKIGHILDNLDELTVSHLRNFLYQVYDGQDLKDNIQSMSDEDLLVFAERLRDGVPMAAPVFEGPKDSQISNLLRLADLDVSGQVDLYDGRIGEKFDRKVTVGYIYMLKLHHLVDDKIHARSVGPYGLVTQQPLGGKSHFGGQRFGEMECWALQAYGAAYTLQEMLTVKSDDIVGRVKIYESIIKGDSNFECGIPESFNVMVKELRSLCLDVALKQDKDFLSNEVKD.

The protein belongs to the RNA polymerase beta chain family. The RNAP catalytic core consists of 2 alpha, 1 beta, 1 beta' and 1 omega subunit. When a sigma factor is associated with the core the holoenzyme is formed, which can initiate transcription.

It catalyses the reaction RNA(n) + a ribonucleoside 5'-triphosphate = RNA(n+1) + diphosphate. DNA-dependent RNA polymerase catalyzes the transcription of DNA into RNA using the four ribonucleoside triphosphates as substrates. In Ehrlichia chaffeensis (strain ATCC CRL-10679 / Arkansas), this protein is DNA-directed RNA polymerase subunit beta.